We begin with the raw amino-acid sequence, 212 residues long: Probable nicotinate-nucleotide adenylyltransferase (212 aa).

The protein belongs to the NadD family.

It carries out the reaction nicotinate beta-D-ribonucleotide + ATP + H(+) = deamido-NAD(+) + diphosphate. The protein operates within cofactor biosynthesis; NAD(+) biosynthesis; deamido-NAD(+) from nicotinate D-ribonucleotide: step 1/1. Catalyzes the reversible adenylation of nicotinate mononucleotide (NaMN) to nicotinic acid adenine dinucleotide (NaAD). The chain is Probable nicotinate-nucleotide adenylyltransferase from Shewanella sp. (strain ANA-3).